We begin with the raw amino-acid sequence, 518 residues long: MVFPVEAIVGLVTFTFLFYFLWTKKSQKPSKPLPPKIPGGWPVIGHLFYFDDDGDDRPLARKLGDLADKYGPVFTFRLGLPLVLVVSSYEAIKDCFSTNDAIFSNRPAFLYGEYLGYNNAMLFLANYGSYWRKNRKLIIQEVLSASRLEKFKHVRFARIQTSIKNLYTRIDGNSSTINLTDWLEELNFGLIVKMIAGKNYESGKGDEQVERFKKAFKDFMILSMEFVLWDAFPIPLFKWVDFQGHVKAMKRTFKDIDSVFQNWLEEHIKKREKIMEVGTEGNEQDFIDVVLSKMSNEYLGEGYSRDTVIKATVFSLVLDAADTVALHINWGMALLINNQNALKKAQEEIDTKVGKDRWVEESDIKDLVYLQAIVKEVLRLYPPGPLLVPHENVEDCVVSGYHIPKGTRLFANVMKLQRDPKLWSNPDKFNPERFIARDIDFHGQHYEYIPFGSGRRSCPGMTYALQVEHLTMAHLIQGFNYRTPTDEPLDMKEGAGITIRKVNPVKVIITPRLAPELY.

The helical transmembrane segment at 2 to 22 (VFPVEAIVGLVTFTFLFYFLW) threads the bilayer. Residue lysine 254 forms a Glycyl lysine isopeptide (Lys-Gly) (interchain with G-Cter in ubiquitin) linkage. Cysteine 458 contacts heme.

Belongs to the cytochrome P450 family. CYP82E2 subfamily. The cofactor is heme. In terms of tissue distribution, expressed in leaves.

Its subcellular location is the membrane. It carries out the reaction (S)-nicotine + reduced [NADPH--hemoprotein reductase] + O2 = (S)-nornicotine + formaldehyde + oxidized [NADPH--hemoprotein reductase] + H2O + H(+). Its pathway is alkaloid biosynthesis; nicotine biosynthesis. Functionally, involved in the biosynthesis of pyridine alkaloid natural products, leading mainly to the production of anabasine, anatabine, nicotine and nornicotine, effective deterrents against herbivores with antiparasitic and pesticide properties (neurotoxins); nornicotine serves as the precursor in the synthesis of the carcinogen compound N'-nitrosonornicotine (NNN). Catalyzes the demethylation of nicotine to form nornicotine. This chain is Nicotine N-demethylase CYP82E3, found in Nicotiana tomentosiformis (Tobacco).